Consider the following 760-residue polypeptide: Probable myosin-binding protein 4 (760 aa).

The chain crosses the membrane as a helical span at residues 26 to 46; sequence WFLILLMFIDALLSYLLVWFA. 4 disordered regions span residues 161 to 189, 247 to 273, 292 to 311, and 348 to 595; these read SRGRNSSSKPNIPAPRHLTRRGSGGSLKK, SEKRTHKSRRRKSFDDKKMSNHKQPVL, SMLGYNLENRTRQKQPVKAK, and EAEV…KHSA. A compositionally biased stretch (low complexity) spans 352–366; the sequence is SGSSSPSGGEFLSPS. Residues 371–383 are compositionally biased toward basic and acidic residues; the sequence is ASREIRIQEHDDS. The span at 385 to 394 shows a compositional bias: polar residues; sequence DFSQNITSSA. Residues 388 to 416 adopt a coiled-coil conformation; that stretch reads QNITSSAMEIEEFEAAIEQKESDHMDVSG. Positions 404–413 are enriched in basic and acidic residues; it reads IEQKESDHMD. Composition is skewed to acidic residues over residues 446-458 and 517-526; these read LEQEQSGEEESEV and EEDVDNEESE. Composition is skewed to basic and acidic residues over residues 537-550 and 562-580; these read VKEEHSAKEEHGDH and SKEEPSLEHSDKDSLKITE. Positions 611-709 constitute a GTD-binding domain; that stretch reads SLVEVLKQQL…DLEMELEYYR (99 aa). The segment at 725 to 760 is disordered; the sequence is GILGNTEETNVTSPTDETSIKDSTDTKLTGSPSAEN. 2 stretches are compositionally biased toward polar residues: residues 730–741 and 750–760; these read TEETNVTSPTDE and TKLTGSPSAEN.

It is found in the endomembrane system. Functionally, membrane-anchored myosin receptors that define a distinct, plant-specific transport vesicle compartment. The chain is Probable myosin-binding protein 4 from Arabidopsis thaliana (Mouse-ear cress).